The primary structure comprises 105 residues: Translation initiation factor 1A 2 (105 aa).

The tract at residues 1-22 is disordered; that stretch reads MRKRREGSAAPSTQEVTRVRTP. The S1-like domain occupies 17–91; that stretch reads TRVRTPRKEN…TKADVIWKYT (75 aa).

Belongs to the eIF-1A family.

Its function is as follows. Seems to be required for maximal rate of protein biosynthesis. Enhances ribosome dissociation into subunits and stabilizes the binding of the initiator Met-tRNA(I) to 40 S ribosomal subunits. This chain is Translation initiation factor 1A 2 (eIF1A2), found in Methanosarcina acetivorans (strain ATCC 35395 / DSM 2834 / JCM 12185 / C2A).